The following is a 332-amino-acid chain: Ketol-acid reductoisomerase (NADP(+)) (332 aa).

Residues 1 to 182 (MAVIYYDKDC…GSNRAGVLET (182 aa)) enclose the KARI N-terminal Rossmann domain. NADP(+)-binding positions include 25-28 (YGAQ) and 83-86 (DTSQ). The active site involves His-108. Gly-134 serves as a coordination point for NADP(+). In terms of domain architecture, KARI C-terminal knotted spans 183 to 328 (TFAEETETDL…AELRSMMSWL (146 aa)). Mg(2+) is bound by residues Asp-191, Glu-195, Glu-227, and Glu-231. Ser-252 lines the substrate pocket.

This sequence belongs to the ketol-acid reductoisomerase family. Mg(2+) serves as cofactor.

It carries out the reaction (2R)-2,3-dihydroxy-3-methylbutanoate + NADP(+) = (2S)-2-acetolactate + NADPH + H(+). The catalysed reaction is (2R,3R)-2,3-dihydroxy-3-methylpentanoate + NADP(+) = (S)-2-ethyl-2-hydroxy-3-oxobutanoate + NADPH + H(+). Its pathway is amino-acid biosynthesis; L-isoleucine biosynthesis; L-isoleucine from 2-oxobutanoate: step 2/4. It functions in the pathway amino-acid biosynthesis; L-valine biosynthesis; L-valine from pyruvate: step 2/4. Its function is as follows. Involved in the biosynthesis of branched-chain amino acids (BCAA). Catalyzes an alkyl-migration followed by a ketol-acid reduction of (S)-2-acetolactate (S2AL) to yield (R)-2,3-dihydroxy-isovalerate. In the isomerase reaction, S2AL is rearranged via a Mg-dependent methyl migration to produce 3-hydroxy-3-methyl-2-ketobutyrate (HMKB). In the reductase reaction, this 2-ketoacid undergoes a metal-dependent reduction by NADPH to yield (R)-2,3-dihydroxy-isovalerate. The sequence is that of Ketol-acid reductoisomerase (NADP(+)) from Dehalococcoides mccartyi (strain ATCC BAA-2266 / KCTC 15142 / 195) (Dehalococcoides ethenogenes (strain 195)).